The following is a 200-amino-acid chain: Protein GrpE (200 aa).

The segment covering 1–11 (MSNQTNKAQDN) has biased composition (polar residues). The disordered stretch occupies residues 1-29 (MSNQTNKAQDNQVEEIVEGELLNENGTEA).

This sequence belongs to the GrpE family. As to quaternary structure, homodimer.

It localises to the cytoplasm. Functionally, participates actively in the response to hyperosmotic and heat shock by preventing the aggregation of stress-denatured proteins, in association with DnaK and GrpE. It is the nucleotide exchange factor for DnaK and may function as a thermosensor. Unfolded proteins bind initially to DnaJ; upon interaction with the DnaJ-bound protein, DnaK hydrolyzes its bound ATP, resulting in the formation of a stable complex. GrpE releases ADP from DnaK; ATP binding to DnaK triggers the release of the substrate protein, thus completing the reaction cycle. Several rounds of ATP-dependent interactions between DnaJ, DnaK and GrpE are required for fully efficient folding. The protein is Protein GrpE of Shewanella halifaxensis (strain HAW-EB4).